The chain runs to 274 residues: Diaminopimelate epimerase (274 aa).

Substrate is bound by residues Asn13, Gln47, and Asn65. The Proton donor role is filled by Cys74. Substrate contacts are provided by residues 75 to 76 (GN), Asn149, Asn182, and 200 to 201 (ER). Cys209 acts as the Proton acceptor in catalysis. 210–211 (GT) is a binding site for substrate.

This sequence belongs to the diaminopimelate epimerase family. Homodimer.

It is found in the cytoplasm. The catalysed reaction is (2S,6S)-2,6-diaminopimelate = meso-2,6-diaminopimelate. It functions in the pathway amino-acid biosynthesis; L-lysine biosynthesis via DAP pathway; DL-2,6-diaminopimelate from LL-2,6-diaminopimelate: step 1/1. Its function is as follows. Catalyzes the stereoinversion of LL-2,6-diaminopimelate (L,L-DAP) to meso-diaminopimelate (meso-DAP), a precursor of L-lysine and an essential component of the bacterial peptidoglycan. The chain is Diaminopimelate epimerase from Rhizorhabdus wittichii (strain DSM 6014 / CCUG 31198 / JCM 15750 / NBRC 105917 / EY 4224 / RW1) (Sphingomonas wittichii).